A 530-amino-acid chain; its full sequence is uncharacterized protein (530 aa).

The next 5 membrane-spanning stretches (helical) occupy residues 4 to 23 (FLAA…GLAI), 28 to 47 (LFGV…VVST), 57 to 79 (FVFQ…PAFF), 91 to 113 (LFMI…AFGL), and 148 to 170 (VIGY…AVGA). Residues 260 to 344 (LGGECDTKIE…MGEVRRFLGD (85 aa)) form the RCK C-terminal domain. 4 helical membrane passes run 352 to 374 (VNLL…PVPL), 379 to 398 (TMYL…LGAL), 419 to 441 (LGLA…QALT), and 451 to 473 (VGFA…LLKL).

Belongs to the AAE transporter (TC 2.A.81) family.

The protein resides in the cell membrane. This is an uncharacterized protein from Corynebacterium efficiens (strain DSM 44549 / YS-314 / AJ 12310 / JCM 11189 / NBRC 100395).